The sequence spans 742 residues: Zinc finger MYND domain-containing protein 15 (742 aa).

Positions 109-199 (LEDGEEGEEE…QKRKGQRSEA (91 aa)) are disordered. Over residues 110–127 (EDGEEGEEEEEEDEEEEK) the composition is skewed to acidic residues. Residues 151 to 161 (SRESPQETNPP) are compositionally biased toward polar residues. A compositionally biased stretch (basic and acidic residues) spans 166 to 189 (EAAREAGGGKDGCREDRVENETRP). The Zn(2+) site is built by Cys313, Cys316, Cys328, Cys331, Cys337, Cys341, His355, and Cys359. The MYND-type zinc finger occupies 313-359 (CHVCHRHSFEAKLTPCPQCSAVLYCGEACLRADWQRCPDDVSHRFWC). Disordered stretches follow at residues 565–590 (EVSV…GRRD) and 701–742 (QGSG…RRRK). The span at 708–724 (APGPPPPSPTPSAPPAP) shows a compositional bias: pro residues. A compositionally biased stretch (basic residues) spans 725–742 (TRRRRGEKKPGRGARRRK).

Interacts with HDAC1, HDAC3, HDAC6 and, to a lesser extent, with HDAC7.

It is found in the nucleus. It localises to the cytoplasm. In terms of biological role, acts as a transcriptional repressor through interaction with histone deacetylases (HDACs). May be important for spermiogenesis. This Homo sapiens (Human) protein is Zinc finger MYND domain-containing protein 15 (ZMYND15).